The following is a 230-amino-acid chain: Probable septum site-determining protein MinC (230 aa).

This sequence belongs to the MinC family. As to quaternary structure, interacts with MinD and FtsZ.

Cell division inhibitor that blocks the formation of polar Z ring septums. Rapidly oscillates between the poles of the cell to destabilize FtsZ filaments that have formed before they mature into polar Z rings. Prevents FtsZ polymerization. In Erwinia tasmaniensis (strain DSM 17950 / CFBP 7177 / CIP 109463 / NCPPB 4357 / Et1/99), this protein is Probable septum site-determining protein MinC.